The following is a 321-amino-acid chain: Peroxidase 4 (321 aa).

The first 25 residues, M1–A25, serve as a signal peptide directing secretion. Q26 is subject to Pyrrolidone carboxylic acid. 4 cysteine pairs are disulfide-bonded: C36/C116, C69/C74, C122/C317, and C201/C226. H67 serves as the catalytic Proton acceptor. Ca(2+) contacts are provided by D68, V71, G73, D75, and S77. P164 provides a ligand contact to substrate. Residue H194 coordinates heme b. T195 lines the Ca(2+) pocket. N-linked (GlcNAc...) asparagine glycosylation occurs at N210. The Ca(2+) site is built by D241, T244, and D249.

Belongs to the peroxidase family. Classical plant (class III) peroxidase subfamily. The cofactor is heme b. Ca(2+) serves as cofactor.

It is found in the secreted. It carries out the reaction 2 a phenolic donor + H2O2 = 2 a phenolic radical donor + 2 H2O. Removal of H(2)O(2), oxidation of toxic reductants, biosynthesis and degradation of lignin, suberization, auxin catabolism, response to environmental stresses such as wounding, pathogen attack and oxidative stress. These functions might be dependent on each isozyme/isoform in each plant tissue. The protein is Peroxidase 4 of Vitis vinifera (Grape).